The chain runs to 134 residues: D-ribose pyranase (134 aa).

H20 functions as the Proton donor in the catalytic mechanism. Substrate-binding positions include D28, H101, and 123–125 (YSN).

The protein belongs to the RbsD / FucU family. RbsD subfamily. In terms of assembly, homodecamer.

The protein localises to the cytoplasm. It catalyses the reaction beta-D-ribopyranose = beta-D-ribofuranose. Its pathway is carbohydrate metabolism; D-ribose degradation; D-ribose 5-phosphate from beta-D-ribopyranose: step 1/2. Catalyzes the interconversion of beta-pyran and beta-furan forms of D-ribose. In Pseudomonas entomophila (strain L48), this protein is D-ribose pyranase.